The sequence spans 1391 residues: Periaxin (1391 aa).

Position 7 is a phosphoserine (serine 7). Positions 16 to 99 (LVEIIVETEA…YKVSFCLKRT (84 aa)) constitute a PDZ domain. The Nuclear export signal signature appears at 70–84 (VFFENFKYEDALRLL). A Nuclear localization signal motif is present at residues 118 to 196 (KGPRAKVAKL…RLQLPRLRVR (79 aa)). Phosphoserine is present on serine 243. 12 tandem repeats follow at residues 432-436 (GPEVK), 440-444 (GPEVK), 448-452 (VPEVK), 456-460 (VPEAA), 464-468 (VQLPE), 469-473 (VQLPK), 474-478 (MSDMK), 482-486 (IPEMV), 487-491 (VPDVR), 495-499 (VQLPK), 500-504 (VPEMK), and 508-512 (MKLPK). Residues 432–719 (GPEVKAPTGP…MQVSQVPEVQ (288 aa)) form a 45 X 5 AA approximate tandem repeats of [LVMGIED]-[PQSKHARMI]-[EDKLVTR]-[LIVMAP]-[AQKHRPEVSD]; that may have a tripeptide spacer of [LVIDEA]-[PMSVI]-[KEATDQ] region. A 13; approximate repeat occupies 513–517 (WPEMA). A run of 32 repeats spans residues 521–525 (VHLPD), 526–530 (VQLPK), 534–538 (MKLPK), 539–543 (VPEMA), 547–551 (VHLPD), 552–556 (VQLPK), 560–564 (MKLPE), 565–569 (MKLPK), 573–577 (MAVPD), 578–582 (VRLPE), 583–587 (VQLPK), 591–595 (VKLPK), 596–600 (MPEMA), 601–605 (VPDVH), 609–613 (LQLPK), 614–618 (MSEVK), 619–623 (LPKMP), 627–631 (VPDVR), 632–636 (LPEVQ), 637–641 (LPKVS), 645–649 (LPKMP), 650–654 (EMTMP), 655–659 (DIRLP), 663–667 (LPKVP), 671–675 (LPEMK), 676–680 (LPEIK), 684–688 (VPDMA), 689–693 (VPDVP), 697–701 (LQLPK), 702–706 (VSDIR), 707–711 (LPEMQ), and 715–719 (VPEVQ). 9 positions are modified to phosphoserine: serine 848, serine 979, serine 1028, serine 1279, serine 1283, serine 1285, serine 1293, serine 1331, and serine 1337. A disordered region spans residues 1267-1366 (LPRVGFSQSE…DREEGGFRVR (100 aa)). Low complexity predominate over residues 1275–1285 (SESVSGEGSPS). Basic and acidic residues predominate over residues 1354-1363 (GSRDREEGGF). Phosphoserine is present on serine 1369.

Belongs to the periaxin family. As to quaternary structure, homodimer (via PDZ domain). Interacts with SCN10A. Found in a complex with SCN10A. Interacts with DRP2. Identified in a dystroglycan complex that contains at least PRX, DRP2, UTRN, DMD and DAG1. Detected in a complex composed of at least EZR, AHNAK, PPL and PRX. Identified in a complex with EZR, AHNAK, BFSP1, BFSP2, ANK2, PLEC, VIM and spectrin. As to expression, detected in myelinating Schwann cells in intramuscular nerves in triangularis sterni. Detected in sciatic nerve. Detected in eye lens fiber cells. Isoform 1 is detected in myelinating Schwann cells in sciatic nerve. Isoform 2 is detected in myelinating Schwann cells in sciatic nerve (at protein level). Detected in sciatic nerve.

It is found in the cell membrane. The protein localises to the cell junction. It localises to the nucleus. Its subcellular location is the cytoplasm. Functionally, scaffolding protein that functions as part of a dystroglycan complex in Schwann cells, and as part of EZR and AHNAK-containing complexes in eye lens fiber cells. Required for the maintenance of the peripheral myelin sheath that is essential for normal transmission of nerve impulses and normal perception of sensory stimuli. Required for normal transport of MBP mRNA from the perinuclear to the paranodal regions. Required for normal remyelination after nerve injury. Required for normal elongation of Schwann cells and normal length of the internodes between the nodes of Ranvier. The demyelinated nodes of Ranvier permit saltatory transmission of nerve impulses; shorter internodes cause slower transmission of nerve impulses. Required for the formation of appositions between the abaxonal surface of the myelin sheath and the Schwann cell plasma membrane; the Schwann cell cytoplasm is restricted to regions between these appositions. Required for the formation of Cajal bands and of Schmidt-Lanterman incisures that correspond to short, cytoplasm-filled regions on myelinated nerves. Recruits DRP2 to the Schwann cell plasma membrane. Required for normal protein composition of the eye lens fiber cell plasma membrane and normal eye lens fiber cell morphology. This is Periaxin (Prx) from Mus musculus (Mouse).